Reading from the N-terminus, the 357-residue chain is Putative RING-H2 finger protein ATL37 (357 aa).

A signal peptide spans 1–31; it reads MTIFTRDFSHRILACVLLPLFLFQCLPYVTC. The chain crosses the membrane as a helical span at residues 47 to 67; that stretch reads SSIIGIVLLSLFLLLLVVYCL. The RING-type; atypical zinc-finger motif lies at 120–162; it reads CAICLCEFEDEEPLRWMPPCSHTFHANCIDEWLSSRSTCPVCR. Positions 172–210 are disordered; that stretch reads SFPHPSMDVETGNAQRGVQESPDERSLTGSSVTCNNNAN. Positions 198 to 210 are enriched in polar residues; the sequence is LTGSSVTCNNNAN. Serine 273 is modified (phosphoserine). 2 disordered regions span residues 281 to 304 and 327 to 357; these read RSSR…QGRQ and LDRD…PEKN. The segment covering 283-304 has biased composition (polar residues); that stretch reads SRQGYRSGSVGNERTGFSQGRQ. Residues 340 to 357 are compositionally biased toward basic and acidic residues; sequence NDKDFGERSFQRLMPEKN.

Belongs to the RING-type zinc finger family. ATL subfamily.

The protein resides in the membrane. The catalysed reaction is S-ubiquitinyl-[E2 ubiquitin-conjugating enzyme]-L-cysteine + [acceptor protein]-L-lysine = [E2 ubiquitin-conjugating enzyme]-L-cysteine + N(6)-ubiquitinyl-[acceptor protein]-L-lysine.. Its pathway is protein modification; protein ubiquitination. This chain is Putative RING-H2 finger protein ATL37 (ATL37), found in Arabidopsis thaliana (Mouse-ear cress).